Consider the following 156-residue polypeptide: Ribosomal RNA large subunit methyltransferase H (156 aa).

S-adenosyl-L-methionine contacts are provided by residues Leu73, Gly104, and 123-128 (VSSLTL).

It belongs to the RNA methyltransferase RlmH family. In terms of assembly, homodimer.

Its subcellular location is the cytoplasm. It carries out the reaction pseudouridine(1915) in 23S rRNA + S-adenosyl-L-methionine = N(3)-methylpseudouridine(1915) in 23S rRNA + S-adenosyl-L-homocysteine + H(+). Its function is as follows. Specifically methylates the pseudouridine at position 1915 (m3Psi1915) in 23S rRNA. This Burkholderia thailandensis (strain ATCC 700388 / DSM 13276 / CCUG 48851 / CIP 106301 / E264) protein is Ribosomal RNA large subunit methyltransferase H.